The sequence spans 466 residues: Cysteine--tRNA ligase (466 aa).

Cys-29 is a binding site for Zn(2+). Positions 31-41 match the 'HIGH' region motif; that stretch reads ATVQAAPHIGH. The Zn(2+) site is built by Cys-208, His-233, and Glu-237. The short motif at 264–268 is the 'KMSKS' region element; the sequence is KMSKS. Position 267 (Lys-267) interacts with ATP.

Belongs to the class-I aminoacyl-tRNA synthetase family. In terms of assembly, monomer. Zn(2+) serves as cofactor.

The protein resides in the cytoplasm. It carries out the reaction tRNA(Cys) + L-cysteine + ATP = L-cysteinyl-tRNA(Cys) + AMP + diphosphate. The protein is Cysteine--tRNA ligase of Streptomyces avermitilis (strain ATCC 31267 / DSM 46492 / JCM 5070 / NBRC 14893 / NCIMB 12804 / NRRL 8165 / MA-4680).